The chain runs to 245 residues: Probable phosphatase YcdX (245 aa).

9 residues coordinate Zn(2+): H7, H9, H15, H40, E73, H101, H131, D192, and H194.

Belongs to the PHP family. In terms of assembly, homotrimer. Zn(2+) serves as cofactor.

The sequence is that of Probable phosphatase YcdX from Escherichia coli O81 (strain ED1a).